The following is a 593-amino-acid chain: MSDLKTALGEAVEAAFAAEGVPAELARVTASDRPDLADFQSNGALAAAKRVGKNPREIATAVAGRLQGDPRLASVEIAGPGFLNLKVADAALAARADAIAADPRAGAGTVPAPRRVIVDYGGPNVAKPMHVGHLRASIIGESVKRLYRFRGDTVIGDAHFGDWGYQMGLLIGAVCDEDAEIRALVDQLNASGDPNGEIPAAFERVTLADLDRLYPLAAAKGKEDPAYRDRARKLTADLQAHKPGCYLLWRRFRDVTQVALERDFHALGVDFDWWKGESDVDHLIQPMVAELADKGLLVDDQGARIVRVAREGDKRELPPLLVVSSEGSAMYGTTDLATILDRKREFDPQLVIYCVDQRQADHFEIVFRAAYLAGYAEEGQLEHIGFGTMNGTDGKPFKTREGGVLKLADLIEMTRSKARERLHEAGLGEDLPAEEFEDIAGKVAVAALKFADLSNFRGTSYVFDLDRFTSFEGKTGPYLLYQAVRVKSLLRKAEAEGAQAGPVTVAEPAERDLVLTLDAFETALQEAYDKKAPNALAEHAYRLSQAFSKFYAACPILAAPPPVRGSRLTLAQATLRQLELALDILGIAVPERM.

The short motif at 123–133 is the 'HIGH' region element; it reads PNVAKPMHVGH.

The protein belongs to the class-I aminoacyl-tRNA synthetase family. In terms of assembly, monomer.

It localises to the cytoplasm. The enzyme catalyses tRNA(Arg) + L-arginine + ATP = L-arginyl-tRNA(Arg) + AMP + diphosphate. In Phenylobacterium zucineum (strain HLK1), this protein is Arginine--tRNA ligase.